Here is a 234-residue protein sequence, read N- to C-terminus: Probable ascorbate-specific transmembrane electron transporter 1 (234 aa).

Over 1–9 the chain is Cytoplasmic; sequence MGLGVRAAP. Residues 10-30 form a helical membrane-spanning segment; sequence FTYVAHALAVAAATMVLVWCI. A Cytochrome b561 domain is found at 13 to 217; that stretch reads VAHALAVAAA…FGASVVVAAV (205 aa). Topologically, residues 31 to 48 are extracellular; sequence HFRGGLAFEATNKNLIFN. A helical membrane pass occupies residues 49-69; the sequence is VHPVLMLIGYIILGSEAIMVY. Histidine 50 is a heme b binding site. 65 to 73 contributes to the L-ascorbate binding site; that stretch reads AIMVYKVLP. The Cytoplasmic segment spans residues 70 to 82; sequence KVLPTWKHDTTKL. Residues 83 to 103 form a helical membrane-spanning segment; that stretch reads IHLILHAIALVFGAVGIYCAF. Heme b is bound by residues histidine 84 and histidine 118. Residues 104 to 121 are Extracellular-facing; that stretch reads KFHNESGIANLYSLHSWL. 114–123 contributes to the monodehydro-L-ascorbate radical binding site; it reads LYSLHSWLGI. A helical membrane pass occupies residues 122 to 142; it reads GIGTICLYGIQWIFGFVAFFF. Residues 143-151 lie on the Cytoplasmic side of the membrane; that stretch reads PRASPSVRK. The chain crosses the membrane as a helical span at residues 152–172; sequence GVLPWHILFGLFVYILALATA. Histidine 157 provides a ligand contact to heme b. Residues 173-194 are Extracellular-facing; it reads ELGFLEKLTFLQSSGLDKYGAE. The helical transmembrane segment at 195 to 215 threads the bilayer; the sequence is AFLVNFTALIVVLFGASVVVA. Residues 216–234 lie on the Cytoplasmic side of the membrane; that stretch reads AVSPARVEEPHEYAPIPES.

The cofactor is heme b.

It localises to the membrane. In terms of biological role, two-heme-containing cytochrome. Catalyzes ascorbate-dependent trans-membrane electron transfer by utilizing a concerted H(+)/e(-) transfer mechanism. The chain is Probable ascorbate-specific transmembrane electron transporter 1 from Oryza sativa subsp. japonica (Rice).